Here is a 559-residue protein sequence, read N- to C-terminus: Actin-binding protein WASF1 (559 aa).

3 disordered regions span residues 170-202 (EDKR…DRRR), 304-383 (IENR…GVLH), and 412-490 (VHPL…HPST). Basic and acidic residues predominate over residues 182–202 (KNLDRPHEPEKVPRAPHDRRR). A compositionally biased stretch (polar residues) spans 304–313 (IENRPQSPAT). Over residues 322-332 (PTPPPPPPPLP) the composition is skewed to pro residues. Residues 333-346 (SALSTSSLRASMTS) show a composition bias toward low complexity. Arginine 341 is subject to Asymmetric dimethylarginine; alternate. Arginine 341 bears the Omega-N-methylarginine; alternate mark. Pro residues-rich tracts occupy residues 347-360 (TPPP…PPPA), 423-437 (LPPP…PPGI), and 460-477 (STAP…PPSQ). Serine 489 is modified (phosphoserine). Residues 497–514 (ARSVLLEAIRKGIQLRKV) form the WH2 domain.

This sequence belongs to the SCAR/WAVE family. In terms of assembly, component of the WAVE1 complex composed of ABI2, CYFIP1 or CYFIP2, BRK1, NCKAP1 and WASF1/WAVE1. Within the complex, a heterodimer containing NCKAP1 and CYFIP1 interacts with a heterotrimer formed by WAVE1, ABI2 and BRK1. CYFIP2 binds to activated RAC1 which causes the complex to dissociate, releasing activated WASF1. The complex can also be activated by NCK1. Binds actin and the Arp2/3 complex. Interacts with BAIAP2. Interacts with SHANK3; the interaction mediates the association of SHANK3 with the WAVE1 complex. Interacts with ABI1 (via N-terminus). Interacts with SORBS2; this interaction greatly enhances phosphorylation by ABL1 and dephosphorylation by PTPN12 and might mediate partial to focal adhesion sites.

The protein resides in the cytoplasm. Its subcellular location is the cytoskeleton. It is found in the synapse. It localises to the cell junction. The protein localises to the focal adhesion. Downstream effector molecule involved in the transmission of signals from tyrosine kinase receptors and small GTPases to the actin cytoskeleton. Promotes formation of actin filaments. Part of the WAVE complex that regulates lamellipodia formation. The WAVE complex regulates actin filament reorganization via its interaction with the Arp2/3 complex. As component of the WAVE1 complex, required for BDNF-NTRK2 endocytic trafficking and signaling from early endosomes. Also involved in the regulation of mitochondrial dynamics. In Pongo abelii (Sumatran orangutan), this protein is Actin-binding protein WASF1 (WASF1).